Consider the following 246-residue polypeptide: 2,3-bisphosphoglycerate-dependent phosphoglycerate mutase (246 aa).

Residues 9-16, 22-23, arginine 61, 88-91, lysine 99, 115-116, and 181-182 contribute to the substrate site; these read RHGQSAWN, TG, ERHY, RR, and GN. Histidine 10 acts as the Tele-phosphohistidine intermediate in catalysis. Residue glutamate 88 is the Proton donor/acceptor of the active site.

Belongs to the phosphoglycerate mutase family. BPG-dependent PGAM subfamily.

The catalysed reaction is (2R)-2-phosphoglycerate = (2R)-3-phosphoglycerate. Its pathway is carbohydrate degradation; glycolysis; pyruvate from D-glyceraldehyde 3-phosphate: step 3/5. Catalyzes the interconversion of 2-phosphoglycerate and 3-phosphoglycerate. The protein is 2,3-bisphosphoglycerate-dependent phosphoglycerate mutase of Bifidobacterium longum (strain DJO10A).